Here is an 83-residue protein sequence, read N- to C-terminus: Cytochrome b559 subunit alpha (83 aa).

Residues V21–W35 traverse the membrane as a helical segment. H23 provides a ligand contact to heme.

This sequence belongs to the PsbE/PsbF family. As to quaternary structure, heterodimer of an alpha subunit and a beta subunit. PSII is composed of 1 copy each of membrane proteins PsbA, PsbB, PsbC, PsbD, PsbE, PsbF, PsbH, PsbI, PsbJ, PsbK, PsbL, PsbM, PsbT, PsbX, PsbY, PsbZ, Psb30/Ycf12, at least 3 peripheral proteins of the oxygen-evolving complex and a large number of cofactors. It forms dimeric complexes. Requires heme b as cofactor.

The protein resides in the plastid. The protein localises to the chloroplast thylakoid membrane. Its function is as follows. This b-type cytochrome is tightly associated with the reaction center of photosystem II (PSII). PSII is a light-driven water:plastoquinone oxidoreductase that uses light energy to abstract electrons from H(2)O, generating O(2) and a proton gradient subsequently used for ATP formation. It consists of a core antenna complex that captures photons, and an electron transfer chain that converts photonic excitation into a charge separation. The polypeptide is Cytochrome b559 subunit alpha (Oenothera berteroana (Bertero's evening primrose)).